The sequence spans 335 residues: DNA-directed RNA polymerase subunit alpha (335 aa).

The interval 1–231 is alpha N-terminal domain (alpha-NTD); that stretch reads MVREKVTVST…DLFIPFLHME (231 aa). The alpha C-terminal domain (alpha-CTD) stretch occupies residues 262–335; the sequence is KKKLSLESIF…FALDLPKNLN (74 aa).

This sequence belongs to the RNA polymerase alpha chain family. In plastids the minimal PEP RNA polymerase catalytic core is composed of four subunits: alpha, beta, beta', and beta''. When a (nuclear-encoded) sigma factor is associated with the core the holoenzyme is formed, which can initiate transcription.

Its subcellular location is the plastid. It carries out the reaction RNA(n) + a ribonucleoside 5'-triphosphate = RNA(n+1) + diphosphate. Functionally, DNA-dependent RNA polymerase catalyzes the transcription of DNA into RNA using the four ribonucleoside triphosphates as substrates. The polypeptide is DNA-directed RNA polymerase subunit alpha (Cuscuta reflexa (Southern Asian dodder)).